A 446-amino-acid chain; its full sequence is Tryptophan synthase beta chain 2 (446 aa).

Residue Lys-110 is modified to N6-(pyridoxal phosphate)lysine.

Belongs to the TrpB family. Tetramer of two alpha and two beta chains. The cofactor is pyridoxal 5'-phosphate.

The enzyme catalyses (1S,2R)-1-C-(indol-3-yl)glycerol 3-phosphate + L-serine = D-glyceraldehyde 3-phosphate + L-tryptophan + H2O. It functions in the pathway amino-acid biosynthesis; L-tryptophan biosynthesis; L-tryptophan from chorismate: step 5/5. The beta subunit is responsible for the synthesis of L-tryptophan from indole and L-serine. The chain is Tryptophan synthase beta chain 2 (trpB2) from Pyrococcus furiosus (strain ATCC 43587 / DSM 3638 / JCM 8422 / Vc1).